Consider the following 491-residue polypeptide: Aspartyl/glutamyl-tRNA(Asn/Gln) amidotransferase subunit B (491 aa).

It belongs to the GatB/GatE family. GatB subfamily. In terms of assembly, heterotrimer of A, B and C subunits.

The catalysed reaction is L-glutamyl-tRNA(Gln) + L-glutamine + ATP + H2O = L-glutaminyl-tRNA(Gln) + L-glutamate + ADP + phosphate + H(+). It catalyses the reaction L-aspartyl-tRNA(Asn) + L-glutamine + ATP + H2O = L-asparaginyl-tRNA(Asn) + L-glutamate + ADP + phosphate + 2 H(+). Allows the formation of correctly charged Asn-tRNA(Asn) or Gln-tRNA(Gln) through the transamidation of misacylated Asp-tRNA(Asn) or Glu-tRNA(Gln) in organisms which lack either or both of asparaginyl-tRNA or glutaminyl-tRNA synthetases. The reaction takes place in the presence of glutamine and ATP through an activated phospho-Asp-tRNA(Asn) or phospho-Glu-tRNA(Gln). The chain is Aspartyl/glutamyl-tRNA(Asn/Gln) amidotransferase subunit B from Burkholderia multivorans (strain ATCC 17616 / 249).